A 766-amino-acid chain; its full sequence is 5-methyltetrahydropteroyltriglutamate--homocysteine methyltransferase (766 aa).

Residues 16–19 (RELK) and Lys124 contribute to the 5-methyltetrahydropteroyltri-L-glutamate site. Residues 445–447 (IGS) and Glu498 each bind L-homocysteine. L-methionine contacts are provided by residues 445–447 (IGS) and Glu498. Residues 529–530 (RC) and Trp575 contribute to the 5-methyltetrahydropteroyltri-L-glutamate site. Asp613 provides a ligand contact to L-homocysteine. Position 613 (Asp613) interacts with L-methionine. Glu619 provides a ligand contact to 5-methyltetrahydropteroyltri-L-glutamate. Zn(2+)-binding residues include His655, Cys657, and Glu679. His708 functions as the Proton donor in the catalytic mechanism. Residue Cys740 coordinates Zn(2+).

The protein belongs to the vitamin-B12 independent methionine synthase family. It depends on Zn(2+) as a cofactor.

The enzyme catalyses 5-methyltetrahydropteroyltri-L-glutamate + L-homocysteine = tetrahydropteroyltri-L-glutamate + L-methionine. Its pathway is amino-acid biosynthesis; L-methionine biosynthesis via de novo pathway; L-methionine from L-homocysteine (MetE route): step 1/1. Catalyzes the transfer of a methyl group from 5-methyltetrahydrofolate to homocysteine resulting in methionine formation. This is 5-methyltetrahydropteroyltriglutamate--homocysteine methyltransferase from Pseudomonas syringae pv. tomato (strain ATCC BAA-871 / DC3000).